The sequence spans 257 residues: Triosephosphate isomerase (257 aa).

Substrate is bound by residues Asn-11 and Lys-13. His-96 acts as the Electrophile in catalysis. The active-site Proton acceptor is the Glu-170.

It belongs to the triosephosphate isomerase family. As to quaternary structure, homodimer.

It localises to the cytoplasm. The enzyme catalyses D-glyceraldehyde 3-phosphate = dihydroxyacetone phosphate. The catalysed reaction is dihydroxyacetone phosphate = methylglyoxal + phosphate. Its pathway is carbohydrate biosynthesis; gluconeogenesis. The protein operates within carbohydrate degradation; glycolysis; D-glyceraldehyde 3-phosphate from glycerone phosphate: step 1/1. Functionally, triosephosphate isomerase is an extremely efficient metabolic enzyme that catalyzes the interconversion between dihydroxyacetone phosphate (DHAP) and D-glyceraldehyde-3-phosphate (G3P) in glycolysis and gluconeogenesis. It is also responsible for the non-negligible production of methylglyoxal a reactive cytotoxic side-product that modifies and can alter proteins, DNA and lipids. The polypeptide is Triosephosphate isomerase (Giardia intestinalis (Giardia lamblia)).